We begin with the raw amino-acid sequence, 482 residues long: Adenylyltransferase and sulfurtransferase uba4 (482 aa).

Positions 33-57 are disordered; the sequence is EGAALRAQSQKTASANATTGQRTKS. Positions 39 to 54 are enriched in polar residues; the sequence is AQSQKTASANATTGQR. ATP contacts are provided by residues glycine 98, aspartate 119, 126–130, lysine 143, and 187–188; these read SNLHR and DN. The Zn(2+) site is built by cysteine 236 and cysteine 239. The active-site Glycyl thioester intermediate; for adenylyltransferase activity is the cysteine 253. Zn(2+)-binding residues include cysteine 315 and cysteine 318. Positions 366 to 480 constitute a Rhodanese domain; it reads AGAQRHIIDV…WREQVDPDWP (115 aa). The active-site Cysteine persulfide intermediate; for sulfurtransferase activity is the cysteine 435.

This sequence in the N-terminal section; belongs to the HesA/MoeB/ThiF family. UBA4 subfamily. Requires Zn(2+) as cofactor.

It localises to the cytoplasm. It is found in the cytosol. The enzyme catalyses [molybdopterin-synthase sulfur-carrier protein]-C-terminal Gly-Gly + ATP + H(+) = [molybdopterin-synthase sulfur-carrier protein]-C-terminal Gly-Gly-AMP + diphosphate. It catalyses the reaction [molybdopterin-synthase sulfur-carrier protein]-C-terminal Gly-Gly-AMP + S-sulfanyl-L-cysteinyl-[cysteine desulfurase] + AH2 = [molybdopterin-synthase sulfur-carrier protein]-C-terminal-Gly-aminoethanethioate + L-cysteinyl-[cysteine desulfurase] + A + AMP + 2 H(+). It participates in tRNA modification; 5-methoxycarbonylmethyl-2-thiouridine-tRNA biosynthesis. Its pathway is cofactor biosynthesis; molybdopterin biosynthesis. Plays a central role in 2-thiolation of mcm(5)S(2)U at tRNA wobble positions of cytosolic tRNA(Lys), tRNA(Glu) and tRNA(Gln). Also essential during biosynthesis of the molybdenum cofactor. Acts by mediating the C-terminal thiocarboxylation of sulfur carriers urm1 and mocs2a. Its N-terminus first activates urm1 and mocs2a as acyl-adenylates (-COAMP), then the persulfide sulfur on the catalytic cysteine is transferred to urm1 and mocs2a to form thiocarboxylation (-COSH) of their C-terminus. The reaction probably involves hydrogen sulfide that is generated from the persulfide intermediate and that acts as a nucleophile towards urm1 and mocs2a. Subsequently, a transient disulfide bond is formed. Does not use thiosulfate as sulfur donor; nfs1 probably acting as a sulfur donor for thiocarboxylation reactions. The protein is Adenylyltransferase and sulfurtransferase uba4 of Emericella nidulans (strain FGSC A4 / ATCC 38163 / CBS 112.46 / NRRL 194 / M139) (Aspergillus nidulans).